The chain runs to 539 residues: RING finger protein 37 (539 aa).

The segment at Pro-226–Leu-249 is disordered. Polar residues predominate over residues Gln-239 to Leu-249. The U-box domain occupies Asp-258 to Ser-338. Disordered stretches follow at residues Leu-359–Ala-399 and Gly-456–Pro-479. Positions His-374–Ser-395 are enriched in low complexity. Residues Cys-481 to Arg-526 form an RING-type zinc finger.

As to quaternary structure, interacts with UBE2L3. Interacts with VCP. Expressed in testis and placenta.

Its subcellular location is the nucleus. The enzyme catalyses S-ubiquitinyl-[E2 ubiquitin-conjugating enzyme]-L-cysteine + [acceptor protein]-L-lysine = [E2 ubiquitin-conjugating enzyme]-L-cysteine + N(6)-ubiquitinyl-[acceptor protein]-L-lysine.. The protein operates within protein modification; protein ubiquitination. Functionally, may have a ubiquitin-protein ligase activity acting as an E3 ubiquitin-protein ligase or as a ubiquitin-ubiquitin ligase promoting elongation of ubiquitin chains on substrates. The chain is RING finger protein 37 (Ubox5) from Mus musculus (Mouse).